A 290-amino-acid chain; its full sequence is Light-independent protochlorophyllide reductase iron-sulfur ATP-binding protein (290 aa).

ATP-binding positions include 10 to 15 (GIGKST) and lysine 39. Residue serine 14 participates in Mg(2+) binding. The [4Fe-4S] cluster site is built by cysteine 95 and cysteine 129. 180–181 (NR) serves as a coordination point for ATP.

This sequence belongs to the NifH/BchL/ChlL family. Homodimer. Protochlorophyllide reductase is composed of three subunits; ChlL, ChlN and ChlB. The cofactor is [4Fe-4S] cluster.

It is found in the plastid. The protein resides in the chloroplast. It catalyses the reaction chlorophyllide a + oxidized 2[4Fe-4S]-[ferredoxin] + 2 ADP + 2 phosphate = protochlorophyllide a + reduced 2[4Fe-4S]-[ferredoxin] + 2 ATP + 2 H2O. It functions in the pathway porphyrin-containing compound metabolism; chlorophyll biosynthesis (light-independent). Its function is as follows. Component of the dark-operative protochlorophyllide reductase (DPOR) that uses Mg-ATP and reduced ferredoxin to reduce ring D of protochlorophyllide (Pchlide) to form chlorophyllide a (Chlide). This reaction is light-independent. The L component serves as a unique electron donor to the NB-component of the complex, and binds Mg-ATP. This is Light-independent protochlorophyllide reductase iron-sulfur ATP-binding protein from Pyropia yezoensis (Susabi-nori).